The sequence spans 333 residues: Fructose-1,6-bisphosphatase class 1 (333 aa).

Residues Glu-92, Asp-113, Leu-115, and Asp-116 each coordinate Mg(2+). Substrate-binding positions include 116–119 (DGSS), Asn-209, Tyr-242, and Lys-272. Glu-278 contributes to the Mg(2+) binding site.

The protein belongs to the FBPase class 1 family. As to quaternary structure, homotetramer. Mg(2+) serves as cofactor.

It is found in the cytoplasm. It carries out the reaction beta-D-fructose 1,6-bisphosphate + H2O = beta-D-fructose 6-phosphate + phosphate. The protein operates within carbohydrate biosynthesis; Calvin cycle. The protein is Fructose-1,6-bisphosphatase class 1 of Chlorobium chlorochromatii (strain CaD3).